The primary structure comprises 638 residues: 1-deoxy-D-xylulose-5-phosphate synthase (638 aa).

Thiamine diphosphate is bound by residues His71 and 112 to 114; that span reads SHA. Asp144 serves as a coordination point for Mg(2+). Residues 145-146, Asn173, Tyr284, and Glu365 each bind thiamine diphosphate; that span reads GA. Asn173 lines the Mg(2+) pocket.

Belongs to the transketolase family. DXPS subfamily. As to quaternary structure, homodimer. Mg(2+) is required as a cofactor. Requires thiamine diphosphate as cofactor.

It carries out the reaction D-glyceraldehyde 3-phosphate + pyruvate + H(+) = 1-deoxy-D-xylulose 5-phosphate + CO2. It participates in metabolic intermediate biosynthesis; 1-deoxy-D-xylulose 5-phosphate biosynthesis; 1-deoxy-D-xylulose 5-phosphate from D-glyceraldehyde 3-phosphate and pyruvate: step 1/1. Its function is as follows. Catalyzes the acyloin condensation reaction between C atoms 2 and 3 of pyruvate and glyceraldehyde 3-phosphate to yield 1-deoxy-D-xylulose-5-phosphate (DXP). This Mycobacterium sp. (strain JLS) protein is 1-deoxy-D-xylulose-5-phosphate synthase.